We begin with the raw amino-acid sequence, 699 residues long: MSSQGAGGGVGDPELFAELWRACAGPLVEVPQRDERVFYFLQGHLEQLQEPTDPALLAEQIKMFQVPYKILCKVVNVELKAETETDEVFAQITLQPDPDQENLPTLPDPPLPEQPRPVVHSFCKILTPSDTSTHGGFSVLRRHANECLPPLDMSMATPTQELITKDLHGSEWRFKHIYRGQPRRHLLTTGWSTFVTSKKLISGDAFVYLRSETGEQRVGVRRLVQKQSTMPASVISSQSMHLGVLASASHAIKTNSIFLVYYRPRLSQSQYIVSVNKYLAASKVGFNVGMRFKMSFEGEDVPVKKFSGTIVGEGDLSLQWSGSEWKSLKVQWDEVTNVNGPERVSPWEIETCDGTAPAINVPLQSATKNKRPREPSETIDLQSLEPAQEFWLSGMPQQHEKTGIGSSEPNCISGHQVVWPGEHPGYGAVSSSVCQNPLVLESWLKDFNSSNKGVSPTLSEISQKIFQVTSNEARIATWPARSAYQAEEPTSKLSSNTAACGYRTEEVAPNASKVVEGKKEPAMFRLFGVDLMKCTSISTTTDDKSSVGAGEASAKGTGSHEDSGQLSAFSKVTKEHIAADESPQEIQSHQNYTARTRIKVQMHGNAVGRAVDLANLDGYEQLMNELEEMFNIKDLKQKWKVAFTDDEGDTMEVGDDPWLEFCQMVRKIVLYPIEDEKKIEPHPKLLSSANPEQDQKTGF.

Residues 122–224 constitute a DNA-binding region (TF-B3); that stretch reads FCKILTPSDT…EQRVGVRRLV (103 aa). 2 disordered regions span residues 539–565 and 680–699; these read TTTD…DSGQ and EPHP…KTGF. The PB1 domain occupies 595 to 684; sequence RTRIKVQMHG…DEKKIEPHPK (90 aa). Over residues 687 to 699 the composition is skewed to polar residues; the sequence is SSANPEQDQKTGF.

The protein belongs to the ARF family. In terms of assembly, homodimers and heterodimers. In terms of tissue distribution, expressed in roots, culms, leaves and young panicles.

The protein localises to the nucleus. In terms of biological role, auxin response factors (ARFs) are transcriptional factors that bind specifically to the DNA sequence 5'-TGTCTC-3' found in the auxin-responsive promoter elements (AuxREs). This chain is Auxin response factor 1 (ARF1), found in Oryza sativa subsp. japonica (Rice).